Consider the following 509-residue polypeptide: Sulfoacetate--CoA ligase (509 aa).

Positions 320–340 (AFSNPLDPGQRRIGSIGRPSG) are disordered.

Belongs to the ATP-dependent AMP-binding enzyme family.

The protein resides in the cytoplasm. The enzyme catalyses sulfoacetate + ATP + CoA = sulfoacetyl-CoA + AMP + diphosphate. In terms of biological role, involved in the degradation of sulfoacetate, a widespread natural product. Catalyzes the CoA- and ATP-dependent conversion of sulfoacetate to sulfoacetyl-CoA and AMP. The sequence is that of Sulfoacetate--CoA ligase from Cupriavidus necator (strain ATCC 17699 / DSM 428 / KCTC 22496 / NCIMB 10442 / H16 / Stanier 337) (Ralstonia eutropha).